A 1038-amino-acid polypeptide reads, in one-letter code: Isoleucine--tRNA ligase (1038 aa).

Residues 48 to 58 (PTANGKPHVGH) carry the 'HIGH' region motif. The 'KMSKS' region motif lies at 590-594 (KMSKS). Position 593 (Lys593) interacts with ATP.

Belongs to the class-I aminoacyl-tRNA synthetase family. IleS type 2 subfamily. As to quaternary structure, monomer. Zn(2+) serves as cofactor.

The protein localises to the cytoplasm. It catalyses the reaction tRNA(Ile) + L-isoleucine + ATP = L-isoleucyl-tRNA(Ile) + AMP + diphosphate. Catalyzes the attachment of isoleucine to tRNA(Ile). As IleRS can inadvertently accommodate and process structurally similar amino acids such as valine, to avoid such errors it has two additional distinct tRNA(Ile)-dependent editing activities. One activity is designated as 'pretransfer' editing and involves the hydrolysis of activated Val-AMP. The other activity is designated 'posttransfer' editing and involves deacylation of mischarged Val-tRNA(Ile). The sequence is that of Isoleucine--tRNA ligase from Clostridium novyi (strain NT).